Here is a 340-residue protein sequence, read N- to C-terminus: MLGIRAMLVMLDYYWIQLITNNDTRSNNTDTIFVSLLTGANGVTRTAIGGLHSNYTNLTEAFRFTPANTTTNSSTEGNWSVTNLTESCINRGESYLTTIWLLNCADNNTYWYSGNAYNHTIDTCKNTVSGYLFFGMCQLWKDWVTNASHDTVRIQSLGNEIRCMLLPRQYTLNATVEWYNKSEGDVPEEFMDYVILTPLAVLTCGLQEAYILDKGRRYMYLFSVSCAGITGTVSIILVSLSLLILICYYRCGRLLICPRGFELLPEFTEEEEEKEKLLTYKDIEVQVPIRTRRLLVPWIRESKMWVLPPPLPPRPPHLIEFPPSPPPSPGPMHMVVCMPA.

The signal sequence occupies residues 1-25; that stretch reads MLGIRAMLVMLDYYWIQLITNNDTR. Over 26–225 the chain is Lumenal; it reads SNNTDTIFVS…RRYMYLFSVS (200 aa). Residues asparagine 27, asparagine 54, asparagine 57, asparagine 68, asparagine 72, asparagine 78, asparagine 83, asparagine 107, asparagine 118, asparagine 146, asparagine 173, and asparagine 180 are each glycosylated (N-linked (GlcNAc...) asparagine; by host). Residues 226–246 traverse the membrane as a helical segment; that stretch reads CAGITGTVSIILVSLSLLILI. Over 247–340 the chain is Cytoplasmic; the sequence is CYYRCGRLLI…PMHMVVCMPA (94 aa).

This sequence belongs to the HHV-5 UL20 protein family.

Its subcellular location is the host endoplasmic reticulum membrane. This is an uncharacterized protein from Human cytomegalovirus (strain AD169) (HHV-5).